The primary structure comprises 236 residues: MEKREELYRGKAKSVYKTDDADRLILLFRNDTSAFDGKRIEQLDRKGMVNNKFNAFIMQKLEEAGVPTQFDKLLGDNECLVKKLDMIPVECVVRNYAAGSLVKRLGVEEGIKLEPSTFELFLKNDEKGDPFINESHVVAFGWGTAEQLVEMKKLSLKVNEVLSKLFDDAGLLLVDFKLEFGVFHGQIVLGDEFSPDGCRLWDKETRKKMDKDRFRQGLGDVIEAYEEVAKRLGVPL.

Belongs to the SAICAR synthetase family.

It catalyses the reaction 5-amino-1-(5-phospho-D-ribosyl)imidazole-4-carboxylate + L-aspartate + ATP = (2S)-2-[5-amino-1-(5-phospho-beta-D-ribosyl)imidazole-4-carboxamido]succinate + ADP + phosphate + 2 H(+). Its pathway is purine metabolism; IMP biosynthesis via de novo pathway; 5-amino-1-(5-phospho-D-ribosyl)imidazole-4-carboxamide from 5-amino-1-(5-phospho-D-ribosyl)imidazole-4-carboxylate: step 1/2. The polypeptide is Phosphoribosylaminoimidazole-succinocarboxamide synthase (Pseudomonas putida (strain ATCC 700007 / DSM 6899 / JCM 31910 / BCRC 17059 / LMG 24140 / F1)).